The following is a 926-amino-acid chain: Peripheral plasma membrane protein CASK (926 aa).

Residues 12–276 enclose the Protein kinase domain; it reads YELCEVIGKG…VYEALNHPWL (265 aa). Residues 18–26 and Lys-41 contribute to the ATP site; that span reads IGKGPFSVV. Ser-51 carries the phosphoserine modification. The active site involves Asp-141. 2 positions are modified to phosphoserine; by autocatalysis: Ser-151 and Ser-155. The residue at position 182 (Thr-182) is a Phosphothreonine. The tract at residues 305 to 315 is calmodulin-binding; sequence KGAVLAAVSSH. Ser-313 bears the Phosphoserine mark. 2 L27 domains span residues 343–398 and 402–455; these read AERA…SPQI and PSDA…YSDE. Residues 482-909 form a required for interaction with NRXN1 (via C-terminal tail) region; sequence MENVTRVRLV…DETIRHLEEA (428 aa). The 82-residue stretch at 490 to 571 folds into the PDZ domain; it reads LVQFQKNTDE…SITFKIVPSY (82 aa). 2 positions are modified to phosphoserine: Ser-570 and Tyr-571. The disordered stretch occupies residues 574-610; sequence QSSSCERDSPSTSRQSPANGHSSTNNSVSDLPSTTQP. An SH3 domain is found at 612–682; it reads GRQIYVRAQF…PSPELQEWRV (71 aa). The 173-residue stretch at 739–911 folds into the Guanylate kinase-like domain; sequence RKTLVLLGAH…TIRHLEEAVE (173 aa).

It in the N-terminal section; belongs to the protein kinase superfamily. CAMK Ser/Thr protein kinase family. CaMK subfamily. Belongs to the MAGUK family. As to quaternary structure, CASK and LIN7 form a tripartite complex with CASKIN1. Component of the brain-specific heterotrimeric complex (LIN-10-LIN-2-LIN-7 complex) composed of at least APBA1, CASK, and LIN7, which associates with the motor protein KIF17 to transport vesicles along microtubules. Forms a heterotrimeric complex with DLG1 and LIN7B via their L27 domains. Identified in a complex with ACTN4, IQGAP1, MAGI2, NPHS1, SPTAN1 and SPTBN1. Part of a complex containing CASK, TBR1 and TSPYL2. Interacts with WHRN. Interacts (via the PDZ, SH3 and guanylate kinase-like domains) with NRXN1 (via C-terminus). Interacts with CASKIN1, APBA1, LIN7(A/B/C), and L27 domain of DLG1 and isoform 2 of DLG4. Interacts with FCHSD2. Interacts with KIRREL3. Interacts with TBR1. Interacts with TSPYL2. It depends on Unlike other protein kinases, does not require a divalent cation such as magnesium for catalytic activity. as a cofactor.

The protein resides in the nucleus. The protein localises to the cytoplasm. It is found in the cell membrane. The enzyme catalyses L-seryl-[protein] + ATP = O-phospho-L-seryl-[protein] + ADP + H(+). It carries out the reaction L-threonyl-[protein] + ATP = O-phospho-L-threonyl-[protein] + ADP + H(+). Its activity is regulated as follows. Differs from archetypal CaMK members in that the kinase domain exhibits a constitutively active conformation and the autoinhibitory region does not engage in direct contact with the ATP-binding cleft, although it still binds Ca(2+)/CAM. In terms of biological role, multidomain scaffolding Mg(2+)-independent protein kinase that catalyzes the phosphotransfer from ATP to proteins such as NRXN1, and plays a role in synaptic transmembrane protein anchoring and ion channel trafficking. Contributes to neural development and regulation of gene expression via interaction with the transcription factor TBR1. Binds to cell-surface proteins, including amyloid precursor protein, neurexins, and syndecans. May mediate a link between the extracellular matrix and the actin cytoskeleton via its interaction with syndecan and with the actin/spectrin-binding protein 4.1. Component of the LIN-10-LIN-2-LIN-7 complex, which associates with the motor protein KIF17 to transport vesicles containing N-methyl-D-aspartate (NMDA) receptor subunit NR2B along microtubules. The polypeptide is Peripheral plasma membrane protein CASK (Mus musculus (Mouse)).